A 101-amino-acid chain; its full sequence is Integration host factor subunit beta (101 aa).

This sequence belongs to the bacterial histone-like protein family. As to quaternary structure, heterodimer of an alpha and a beta chain.

This protein is one of the two subunits of integration host factor, a specific DNA-binding protein that functions in genetic recombination as well as in transcriptional and translational control. In Maricaulis maris (strain MCS10) (Caulobacter maris), this protein is Integration host factor subunit beta.